Here is a 259-residue protein sequence, read N- to C-terminus: MAVISMKQLLEAGVHFGHQTRRWNPKMAKYIFTERNGIHVIDLQQTVKYADQAYDFMRDAAANDAVVLFVGTKKQAADAVAEEAVRSGQYFINHRWLGGTLTNWGTIQKRIARLKEIKRMEEDGTFEVLPKKEVALLNKQRARLEKFLGGIEDMPRIPDVMYVVDPHKEQIAVKEAKKLGIPVVAMVDTNTDPDDIDVIIPANDDAIRAVKLITAKLADAIIEGRQGEDAVAVEAEFAASETQADSIEEIVEVVEGDNK.

Belongs to the universal ribosomal protein uS2 family.

This is Small ribosomal subunit protein uS2 from Streptococcus pneumoniae serotype 2 (strain D39 / NCTC 7466).